Here is a 343-residue protein sequence, read N- to C-terminus: NADH-quinone oxidoreductase subunit H (343 aa).

A run of 8 helical transmembrane segments spans residues 21-41, 95-115, 124-144, 172-192, 197-217, 257-277, 281-301, and 317-337; these read WTLV…LFCV, FILA…VVPF, VNVG…GVLL, MGFT…GDIV, GLWY…SVVA, IIMV…PPIE, FIPG…FFLW, and LGWK…GLAM.

Belongs to the complex I subunit 1 family. As to quaternary structure, NDH-1 is composed of 14 different subunits. Subunits NuoA, H, J, K, L, M, N constitute the membrane sector of the complex.

Its subcellular location is the cell inner membrane. The enzyme catalyses a quinone + NADH + 5 H(+)(in) = a quinol + NAD(+) + 4 H(+)(out). Functionally, NDH-1 shuttles electrons from NADH, via FMN and iron-sulfur (Fe-S) centers, to quinones in the respiratory chain. The immediate electron acceptor for the enzyme in this species is believed to be ubiquinone. Couples the redox reaction to proton translocation (for every two electrons transferred, four hydrogen ions are translocated across the cytoplasmic membrane), and thus conserves the redox energy in a proton gradient. This subunit may bind ubiquinone. The polypeptide is NADH-quinone oxidoreductase subunit H (Magnetococcus marinus (strain ATCC BAA-1437 / JCM 17883 / MC-1)).